The sequence spans 1868 residues: Inactive histone-lysine N-methyltransferase 2E (1868 aa).

The HCFC1-binding motif (HBM) signature appears at 63-66 (DHNY). The PHD-type zinc finger occupies 118 to 166 (VTRCICGFTHDDGYMICCDKCSVWQHIDCMGIDRQHIPDTYLCERCQPR). Zn(2+)-binding residues include cysteine 121, cysteine 123, cysteine 135, cysteine 138, histidine 143, cysteine 146, cysteine 160, and cysteine 163. Disordered regions lie at residues 178–197 (RRKR…SGDE), 217–268 (ASRV…SSDS), and 308–329 (GSGN…SLFR). The region spanning 330–447 (PPVESHIQKN…KGTEITIAFD (118 aa)) is the SET domain. Serine 435 carries O-linked (GlcNAc) serine glycosylation. An O-linked (GlcNAc) threonine glycan is attached at threonine 440. Residues 472–504 (KRSSESTENINSGYETRRKKGKKEKDTSKEKDI) form a disordered region. Residues 494-504 (KEKDTSKEKDI) are compositionally biased toward basic and acidic residues. The stretch at 559-613 (VEMESEEQIAERKRKMTREERKMEAILQAFARLEKREKRREQALERISTAKTEVK) forms a coiled coil. Basic residues predominate over residues 646 to 670 (NRTKQRKSFSRSRTHIGQQRRRHRT). The tract at residues 646-682 (NRTKQRKSFSRSRTHIGQQRRRHRTVSMCSDIPPSSP) is disordered. Serine 837 and serine 845 each carry phosphoserine. The span at 884-908 (YSESSTPTPSPYATPTHTDITPTDP) shows a compositional bias: low complexity. Disordered regions lie at residues 884-924 (YSES…ETYR) and 1038-1068 (SMET…SSWV). Residues 1049–1068 (PSNQLDSTHSGRGTMYSSWV) are compositionally biased toward polar residues. The residue at position 1070 (serine 1070) is a Phosphoserine. 4 disordered regions span residues 1165–1222 (KRQR…PPPA), 1236–1315 (SSEE…SNHI), 1334–1565 (PDAE…QNQQ), and 1585–1842 (VFTS…QASP). A compositionally biased stretch (low complexity) spans 1184 to 1197 (SVSPHPSGSLSSSG). Polar residues predominate over residues 1203–1213 (SSENGEQAENQ). Serine 1282 carries the phosphoserine modification. Basic and acidic residues predominate over residues 1282–1291 (SDHRKDKDSG). Low complexity-rich tracts occupy residues 1294 to 1312 (SPCV…SSHS) and 1348 to 1363 (PSPD…SKPG). Serine 1364 is subject to Phosphoserine. Composition is skewed to polar residues over residues 1389 to 1421 (ATVS…QNHA), 1451 to 1463 (HTEN…TPHT), and 1488 to 1498 (SQSPQVGTPQR). Over residues 1506–1518 (AAAQNLQANPQQA) the composition is skewed to low complexity. Over residues 1519 to 1547 (TSGALFTQTPSGQSSATYSQFNQQSLNST) the composition is skewed to polar residues. The span at 1548-1558 (APPPPPPPPPS) shows a compositional bias: pro residues. Over residues 1585-1603 (VFTSGPNQALPGSTSQQSV) the composition is skewed to polar residues. A compositionally biased stretch (pro residues) spans 1631–1642 (VPPPPPPPPAPG). The segment covering 1647–1656 (QQPSSHQQHS) has biased composition (polar residues). The segment covering 1682 to 1692 (LPPPPPPPGPA) has biased composition (pro residues). Residues 1706–1716 (QSLQAQHQHVV) show a composition bias toward polar residues. Pro residues predominate over residues 1719–1732 (APPPPPPPPPPPPA). The span at 1806–1816 (QGPNSIPTPTA) shows a compositional bias: polar residues.

The protein belongs to the class V-like SAM-binding methyltransferase superfamily. Histone-lysine methyltransferase family. TRX/MLL subfamily. Component of a complex composed of KMT2E, OGT and USP7; the complex stabilizes KMT2E, preventing KMT2E ubiquitination and proteasomal-mediated degradation. Interacts (via N-terminus) with OGT (via TRP repeats). Interacts with deubiquitinating enzyme USP7 (via MATH domain). Interacts (via HBM motif) with HCFC1 (via Kelch domain). Interacts with E2F1; the interaction is probably indirect and is mediated via HCFC1. Ubiquitinated. Deubiquitinated by USP7. In terms of processing, O-glycosylated at Ser-435 and Thr-440 in the SET domain by OGT which probably prevents KMT2E proteasomal-mediated degradation.

It is found in the chromosome. Its subcellular location is the cytoplasm. The protein localises to the cytoskeleton. The protein resides in the microtubule organizing center. It localises to the centrosome. It is found in the nucleus speckle. Associates with chromatin regions downstream of transcriptional start sites of active genes and thus regulates gene transcription. Chromatin interaction is mediated via the binding to tri-methylated histone H3 at 'Lys-4' (H3K4me3). Key regulator of hematopoiesis involved in terminal myeloid differentiation and in the regulation of hematopoietic stem cell (HSCs) self-renewal by a mechanism that involves DNA methylation. Also acts as an important cell cycle regulator, participating in cell cycle regulatory network machinery at multiple cell cycle stages including G1/S transition, S phase progression and mitotic entry. Recruited to E2F1 responsive promoters by HCFC1 where it stimulates tri-methylation of histone H3 at 'Lys-4' and transcriptional activation and thereby facilitates G1 to S phase transition. During myoblast differentiation, required to suppress inappropriate expression of S-phase-promoting genes and maintain expression of determination genes in quiescent cells. This chain is Inactive histone-lysine N-methyltransferase 2E (Kmt2e), found in Mus musculus (Mouse).